A 628-amino-acid chain; its full sequence is Hepatocyte nuclear factor 1-alpha (628 aa).

The tract at residues 1 to 31 (MVSKLSQLQTELLAALLESGLSKEALIQALG) is dimerization. The region spanning 1–32 (MVSKLSQLQTELLAALLESGLSKEALIQALGE) is the HNF-p1 domain. The disordered stretch occupies residues 47-79 (GESCGGTRGDLTELPNGLGETRGSEDDTDDDGE). Phosphoserine is present on S70. The residue at position 74 (T74) is a Phosphothreonine. The POU-specific atypical domain maps to 87-182 (KELENLSPEE…VAQQFTHAGQ (96 aa)). S93 is subject to Phosphoserine. A Glycyl lysine isopeptide (Lys-Gly) (interchain with G-Cter in ubiquitin) cross-link involves residue K117. 4 interaction with DNA regions span residues 130–132 (QRE), 143–149 (HLSQHLN), 155–158 (KTQK), and 203–206 (RFKW). The disordered stretch occupies residues 183–205 (GGLIEEPTGDELPTKKGRRNRFK). A Nuclear localization signal motif is present at residues 197–205 (KKGRRNRFK). The segment at residues 199-279 (GRRNRFKWGP…NRRKEEAFRH (81 aa)) is a DNA-binding region (homeobox; HNF1-type). S247 carries the post-translational modification Phosphoserine. Interaction with DNA stretches follow at residues 263 to 265 (RVY) and 270 to 273 (NRRK). 2 disordered regions span residues 284–338 (DTYN…SSSG) and 541–585 (FTSD…LSTS). The segment covering 288 to 298 (GPPPGPGPGPA) has biased composition (pro residues). Position 313 is a phosphoserine (S313). 2 stretches are compositionally biased toward polar residues: residues 324 to 338 (QSATSEAAEVPSSSG) and 558 to 575 (SPATTIHIPSQDPSNIQH).

The protein belongs to the HNF1 homeobox family. In terms of assembly, binds DNA as a dimer. Heterotetramer with PCBD1; formed by a dimer of dimers. Interacts with PCBD1. Interacts with BHLHE41. Interacts with NR5A2. Interacts with SPOP; this interaction promotes ubiquitination and degradation of HNF1A. Post-translationally, ubiquitinated in s SPOP-dependent manner; leading to prteasomal degradation. Liver.

It localises to the nucleus. Functionally, transcriptional activator that regulates the tissue specific expression of multiple genes, especially in pancreatic islet cells and in liver. Binds to the inverted palindrome 5'-GTTAATNATTAAC-3'. Activates the transcription of CYP1A2, CYP2E1 and CYP3A11. The protein is Hepatocyte nuclear factor 1-alpha (Hnf1a) of Rattus norvegicus (Rat).